Here is a 197-residue protein sequence, read N- to C-terminus: Phospholipid hydroperoxide glutathione peroxidase (197 aa).

Ser-40 carries the phosphoserine modification. Sec-73 is a catalytic residue. Position 73 (Sec-73) is a non-standard amino acid, selenocysteine.

It belongs to the glutathione peroxidase family. In terms of assembly, monomer. Has a tendency to form higher mass oligomers. Interacts with FUNDC1; this interaction promotes GPX4 recruitment into mitochondria through TOM/TIM complex where it is degraded by mitophagy.

Its subcellular location is the mitochondrion. The protein resides in the cytoplasm. The enzyme catalyses a hydroperoxy polyunsaturated fatty acid + 2 glutathione = a hydroxy polyunsaturated fatty acid + glutathione disulfide + H2O. The catalysed reaction is 2 glutathione + H2O2 = glutathione disulfide + 2 H2O. It carries out the reaction tert-butyl hydroperoxide + 2 glutathione = tert-butanol + glutathione disulfide + H2O. It catalyses the reaction cumene hydroperoxide + 2 glutathione = 2-phenylpropan-2-ol + glutathione disulfide + H2O. The enzyme catalyses (9S)-hydroperoxy-(10E,12Z)-octadecadienoate + 2 glutathione = (9S)-hydroxy-(10E,12Z)-octadecadienoate + glutathione disulfide + H2O. The catalysed reaction is (13S)-hydroperoxy-(9Z,11E)-octadecadienoate + 2 glutathione = (13S)-hydroxy-(9Z,11E)-octadecadienoate + glutathione disulfide + H2O. It carries out the reaction (5S)-hydroperoxy-(6E,8Z,11Z,14Z)-eicosatetraenoate + 2 glutathione = (5S)-hydroxy-(6E,8Z,11Z,14Z)-eicosatetraenoate + glutathione disulfide + H2O. It catalyses the reaction (12R)-hydroperoxy-(5Z,8Z,10E,14Z)-eicosatetraenoate + 2 glutathione = (12R)-hydroxy-(5Z,8Z,10E,14Z)-eicosatetraenoate + glutathione disulfide + H2O. The enzyme catalyses (12S)-hydroperoxy-(5Z,8Z,10E,14Z)-eicosatetraenoate + 2 glutathione = (12S)-hydroxy-(5Z,8Z,10E,14Z)-eicosatetraenoate + glutathione disulfide + H2O. The catalysed reaction is (15S)-hydroperoxy-(5Z,8Z,11Z,13E)-eicosatetraenoate + 2 glutathione = (15S)-hydroxy-(5Z,8Z,11Z,13E)-eicosatetraenoate + glutathione disulfide + H2O. It carries out the reaction (5S)-hydroperoxy-(6E,8Z,11Z,14Z,17Z)-eicosapentaenoate + 2 glutathione = (5S)-hydroxy-(6E,8Z,11Z,14Z,17Z)-eicosapentaenoate + glutathione disulfide + H2O. It catalyses the reaction (12S)-hydroperoxy-(5Z,8Z,10E,14Z,17Z)-eicosapentaenoate + 2 glutathione = (12S)-hydroxy-(5Z,8Z,10E,14Z,17Z)-eicosapentaenoate + glutathione disulfide + H2O. The enzyme catalyses (15S)-hydroperoxy-(5Z,8Z,11Z,13E,17Z)-eicosapentaenoate + 2 glutathione = (15S)-hydroxy-(5Z,8Z,11Z,13E,17Z)-eicosapentaenoate + glutathione disulfide + H2O. The catalysed reaction is (15S)-hydroperoxy-(11Z,13E)-eicosadienoate + 2 glutathione = (15S)-hydroxy-(11Z,13E)-eicosadienoate + glutathione disulfide + H2O. It carries out the reaction (17S)-hydroperoxy-(4Z,7Z,10Z,13Z,15E,19Z)-docosahexaenoate + 2 glutathione = (17S)-hydroxy-(4Z,7Z,10Z,13Z,15E,19Z)-docosahexaenoate + glutathione disulfide + H2O. It catalyses the reaction a hydroperoxy-1,2-diacyl-glycero-3-phosphocholine + 2 glutathione = a hydroxy-1,2-diacyl-glycero-3-phosphocholine + glutathione disulfide + H2O. Essential antioxidant peroxidase that directly reduces phospholipid hydroperoxide even if they are incorporated in membranes and lipoproteins. Can also reduce fatty acid hydroperoxide, cholesterol hydroperoxide and thymine hydroperoxide. Plays a key role in protecting cells from oxidative damage by preventing membrane lipid peroxidation. Required to prevent cells from ferroptosis, a non-apoptotic cell death resulting from an iron-dependent accumulation of lipid reactive oxygen species. The presence of selenocysteine (Sec) versus Cys at the active site is essential for life: it provides resistance to overoxidation and prevents cells against ferroptosis. The presence of Sec at the active site is also essential for the survival of a specific type of parvalbumin-positive interneurons, thereby preventing against fatal epileptic seizures. May be required to protect cells from the toxicity of ingested lipid hydroperoxides. Required for normal sperm development and male fertility. Essential for maturation and survival of photoreceptor cells. Plays a role in a primary T-cell response to viral and parasitic infection by protecting T-cells from ferroptosis and by supporting T-cell expansion. Plays a role of glutathione peroxidase in platelets in the arachidonic acid metabolism. Reduces hydroperoxy ester lipids formed by a 15-lipoxygenase that may play a role as down-regulator of the cellular 15-lipoxygenase pathway. Can also reduce small soluble hydroperoxides such as H2O2, cumene hydroperoxide and tert-butyl hydroperoxide. In Pongo pygmaeus (Bornean orangutan), this protein is Phospholipid hydroperoxide glutathione peroxidase.